The following is a 501-amino-acid chain: Cytochrome P450 4d2 (501 aa).

The heme site is built by E311 and C449.

The protein belongs to the cytochrome P450 family. The cofactor is heme.

Its subcellular location is the endoplasmic reticulum membrane. It is found in the microsome membrane. In terms of biological role, involved in the metabolism of insect hormones and in the breakdown of synthetic insecticides. The chain is Cytochrome P450 4d2 (Cyp4d2) from Drosophila melanogaster (Fruit fly).